We begin with the raw amino-acid sequence, 136 residues long: 5-hydroxyisourate hydrolase (136 aa).

The signal sequence occupies residues 1–22 (MKRHILATVIASLVAAPAMALA). Positions 31, 69, and 133 each coordinate substrate.

Belongs to the transthyretin family. 5-hydroxyisourate hydrolase subfamily. In terms of assembly, homotetramer.

Its subcellular location is the periplasm. It carries out the reaction 5-hydroxyisourate + H2O = 5-hydroxy-2-oxo-4-ureido-2,5-dihydro-1H-imidazole-5-carboxylate + H(+). Functionally, catalyzes the hydrolysis of 5-hydroxyisourate (HIU) to 2-oxo-4-hydroxy-4-carboxy-5-ureidoimidazoline (OHCU). The polypeptide is 5-hydroxyisourate hydrolase (hiuH) (Salmonella dublin).